The chain runs to 187 residues: Protein TIFY 11b (187 aa).

Residues 68 to 103 (ATAPAAPLTIFYGGRMVVFEDFPADKAAEVMRMASS) form the Tify domain. Residues 121–145 (PIMRKASLQRFFAKRKDRLAATTPY) carry the Jas motif. A Nuclear localization signal motif is present at residues 123 to 130 (MRKASLQR). The tract at residues 139-168 (LAATTPYARPSPAETKASEPEEKKTPTSWL) is disordered. The segment covering 154 to 163 (KASEPEEKKT) has biased composition (basic and acidic residues).

It belongs to the TIFY/JAZ family. Interacts with COI1B in a coronatine-dependent manner. Coronatine is an analog of jasmonoyl isoleucine (JA-Ile). Ubiquitinated. Targeted for degradation by the SCF(COI1) E3 ubiquitin ligase-proteasome pathway during jasmonate signaling.

It localises to the nucleus. Functionally, repressor of jasmonate responses. The polypeptide is Protein TIFY 11b (Oryza sativa subsp. japonica (Rice)).